The chain runs to 326 residues: Ankyrin repeat domain-containing protein 9 (326 aa).

The segment at 1-20 (MPWDTRPGRSANGGPEGPGA) is disordered. An ANK 1 repeat occupies 70-99 (SPSEALLYALVHDHQAYAHYLLATFPRCAL). The short motif at 108 to 109 (CC) is the Important role in both nutrient sensing and binding/regulation of IMPDH2 element. ANK repeat units follow at residues 111–140 (APGP…DFPV) and 157–186 (GGGT…SPGL).

In terms of assembly, part of an E3 ubiquitin-protein ligase complex with Elongin BC (ELOB and ELOC), CUL5 and ANKRD9. Interacts with IMPDH2; leading to ubiquitination of IMPDH2 and its subsequent proteasomal degradation.

It is found in the cytoplasmic vesicle. The protein resides in the cytoplasm. The protein localises to the cytosol. It functions in the pathway protein modification; protein ubiquitination. Substrate receptor subunit of a cullin-RING superfamily E3 ligase complex (CUL5-based E3 ubiquitin ligase complex) which mediates the ubiquitination and subsequent proteasomal degradation of target proteins. Depending of the metabolic state of the cell, promotes the proteasomal degradation of IMPDH2, the rate-limiting enzyme in GTP biosynthesis or protects IMPDH2 by stabilizing IMPDH2 filaments assembly. Implicated in different cellular processes, like copper homeostasis and cell proliferation. The sequence is that of Ankyrin repeat domain-containing protein 9 (Ankrd9) from Mus musculus (Mouse).